The chain runs to 143 residues: Transcriptional regulator MraZ (143 aa).

SpoVT-AbrB domains lie at 5–47 (TYTP…PRAE) and 76–119 (TDEQ…DAAA).

It belongs to the MraZ family. In terms of assembly, forms oligomers.

The protein localises to the cytoplasm. The protein resides in the nucleoid. The sequence is that of Transcriptional regulator MraZ from Mycobacterium sp. (strain JLS).